A 435-amino-acid polypeptide reads, in one-letter code: UDP-N-acetylmuramate--L-alanine ligase (435 aa).

108 to 114 (GSHGKTS) contacts ATP.

Belongs to the MurCDEF family.

It is found in the cytoplasm. The enzyme catalyses UDP-N-acetyl-alpha-D-muramate + L-alanine + ATP = UDP-N-acetyl-alpha-D-muramoyl-L-alanine + ADP + phosphate + H(+). It participates in cell wall biogenesis; peptidoglycan biosynthesis. Functionally, cell wall formation. The polypeptide is UDP-N-acetylmuramate--L-alanine ligase (Shouchella clausii (strain KSM-K16) (Alkalihalobacillus clausii)).